Reading from the N-terminus, the 418-residue chain is Actin-related protein 3-A (418 aa).

It belongs to the actin family. ARP3 subfamily. As to quaternary structure, component of the Arp2/3 complex composed of actr2/arp2, actr3/arp3, arpc1 (arpc1a or arpc1b), arpc2, arpc3, arpc4 and arpc5.

The protein localises to the cytoplasm. It localises to the cytoskeleton. It is found in the cell projection. Its subcellular location is the nucleus. Its function is as follows. ATP-binding component of the Arp2/3 complex, a multiprotein complex that mediates actin polymerization upon stimulation by nucleation-promoting factor (NPF). The Arp2/3 complex mediates the formation of branched actin networks in the cytoplasm, providing the force for cell motility. Seems to contact the pointed end of the daughter actin filament. In addition to its role in the cytoplasmic cytoskeleton, the Arp2/3 complex also promotes actin polymerization in the nucleus, thereby regulating gene transcription and repair of damaged DNA. The Arp2/3 complex promotes homologous recombination (HR) repair in response to DNA damage by promoting nuclear actin polymerization, leading to drive motility of double-strand breaks (DSBs). The sequence is that of Actin-related protein 3-A from Xenopus laevis (African clawed frog).